Consider the following 461-residue polypeptide: MRVLIKNGTVVNADGQAKQDLLIESGIVRQLGNNISPQLPYEEIDATGCYVFPGGVDVHTHFNIDVGIARSCDDFFTGTRAAACGGTTTIIDHMGFGPNGCRLRHQLEVYRGYAAHKAVIDYSFHGVIQHINHAILDEIPMMAEEGLSSFKLYLTYQYKLNDDEVLQALRRLHESGALTTVHPENDAAIASKRAEFIAAGLTAPRYHALSRPLECEAEAIARMINLAQIAGNAPLYIVHLSNGLGLDYLRLARANHQPVWVETCPQYLLLDERSYDTEDGMKFILSPPLRNVREQDKLWCGISDGAIDVVATDHCTFSMAQRLQISKGDFSRCPNGLPGVENRMQLLFSSGVMTGRITPERFVELTSAMPARLFGLWPQKGLLAPGSDGDVVIIDPRQSQQIQHRHLHDNADYSPWEGFTCQGAIVRTLSRGETIFCDGTFTGKAGRGRFLRRKPFVPPVL.

A divalent metal cation is bound by residues histidine 59, histidine 61, and lysine 151. N6-carboxylysine is present on lysine 151. Position 156 (tyrosine 156) interacts with substrate. A divalent metal cation contacts are provided by histidine 182 and histidine 239. Serine 286 provides a ligand contact to substrate. An a divalent metal cation-binding site is contributed by aspartate 313. Asparagine 335 contacts substrate.

Belongs to the metallo-dependent hydrolases superfamily. Hydantoinase/dihydropyrimidinase family. As to quaternary structure, homotetramer. It depends on a divalent metal cation as a cofactor. Carboxylation allows a single lysine to coordinate two divalent metal cations.

The catalysed reaction is D-5-phenylhydantoin + H2O = N-carbamoyl-D-phenylglycine + H(+). In terms of biological role, catalyzes the stereospecific hydrolysis of the cyclic amide bond of D-hydantoin derivatives with an aromatic side chains at the 5'-position. Has no activity on dihydropyrimidines. The physiological function is unknown. This chain is D-phenylhydantoinase, found in Escherichia coli O9:H4 (strain HS).